The chain runs to 278 residues: Urease accessory protein UreD 3 (278 aa).

Belongs to the UreD family. UreD, UreF and UreG form a complex that acts as a GTP-hydrolysis-dependent molecular chaperone, activating the urease apoprotein by helping to assemble the nickel containing metallocenter of UreC. The UreE protein probably delivers the nickel.

The protein resides in the cytoplasm. In terms of biological role, required for maturation of urease via the functional incorporation of the urease nickel metallocenter. This is Urease accessory protein UreD 3 from Bradyrhizobium sp. (strain BTAi1 / ATCC BAA-1182).